The chain runs to 687 residues: Protein white (687 aa).

The segment at 1 to 30 (MGQEDQELLIRGGSKHPSAEHLNNGDSGAA) is disordered. Topologically, residues 1–419 (MGQEDQELLI…FMQFRAVLWR (419 aa)) are cytoplasmic. In terms of domain architecture, ABC transporter spans 93 to 341 (NRTRGLFCNE…FSYVGAQCPT (249 aa)). 130–137 (GSSGAGKT) serves as a coordination point for ATP. A helical transmembrane segment spans residues 420–440 (SWLSVLKEPLLVKVRLIQTTM). Over 441-460 (VAILIGLIFLGQQLTQVGVM) the chain is Extracellular. A helical membrane pass occupies residues 461-481 (NINGAIFLFLTNMTFQNVFAT). The Cytoplasmic portion of the chain corresponds to 482 to 497 (INVFTSELPVFMREAR). Residues 498-518 (SRLYRCDTYFLGKTIAELPLF) form a helical membrane-spanning segment. The Extracellular segment spans residues 519–531 (LTVPLVFTAIAYP). The chain crosses the membrane as a helical span at residues 532-552 (MIGLRAGVLHFFNCLALVTLV). Residues 553-568 (ANVSTSFGYLISCASS) lie on the Cytoplasmic side of the membrane. Residues 569-589 (STSMALSVGPPVIIPFLLFGG) form a helical membrane-spanning segment. Over 590-644 (FFLNSGSVPVYLKWLSYLSWFRYANEGLLINQWADVEPGEISCTSSNTTCPSSGK) the chain is Extracellular. N636 carries N-linked (GlcNAc...) asparagine glycosylation. The chain crosses the membrane as a helical span at residues 645–665 (VILETLNFSAADLPLDYVGLA). Residues 666 to 675 (ILIVSFRVLA) are Cytoplasmic-facing.

The protein belongs to the ABC transporter superfamily. ABCG family. Eye pigment precursor importer (TC 3.A.1.204) subfamily. May form a heterodimer with bw/brown. May form a heterodimer with st/scarlet. Expressed in the head (at protein level). Expressed in the eye, specifically in retina primary pigment cells, in the basement membrane of the base of secondary and tertiary pigment cells, and in retinula cells (at protein level). Expressed in the retina underlying lamina in the epithelial glia that surrounds the array of lamina cartridges (at protein level). Weakly expressed in photoreceptors, specifically in terminals of R1-R6, R7 and R8 (at protein level). Expressed at very low levels in medulla and central brain (at protein level). Expressed in principal cells of the Malpighian tubules.

It localises to the cytoplasmic vesicle membrane. It carries out the reaction 3',5'-cyclic GMP(in) + ATP + H2O = 3',5'-cyclic GMP(out) + ADP + phosphate + H(+). The enzyme catalyses guanine(out) + ATP + H2O = guanine(in) + ADP + phosphate + H(+). The catalysed reaction is riboflavin(in) + ATP + H2O = riboflavin(out) + ADP + phosphate + H(+). It catalyses the reaction (6S)-5,6,7,8-tetrahydrofolate(out) + ATP + H2O = (6S)-5,6,7,8-tetrahydrofolate(in) + ADP + phosphate + H(+). It carries out the reaction L-tryptophan(out) + ATP + H2O = L-tryptophan(in) + ADP + phosphate + H(+). The enzyme catalyses L-kynurenine(out) + ATP + H2O = L-kynurenine(in) + ADP + phosphate + H(+). The catalysed reaction is xanthine(out) + ATP + H2O = xanthine(in) + ADP + phosphate + H(+). Its function is as follows. ATP-dependent transporter of the ATP-binding cassette (ABC) family which transports various molecules including bioamines, neurotransmitters, metabolic intermediates and second messengers. In the eye, required for the transport of the eye red and brown pigment precursors, guanine and tryptophan, into pigment cell granules. Probably in association with bw/brown, involved in the transport of guanine. Probably in association with st/scarlet involved in the transport of kynurenine and probably tryptophan. Involved in the transport of kynurenine in pupal eyes. May play a role in histamine uptake by the lamina epithelial glia which surrounds photoreceptors R1-R6. In Malpighian tubules, involved in the transport of cGMP, guanine, xanthine, riboflavin, kynurenine and tryptophan. Probably in association with br/brown, involved in aging-induced intestinal stem cell proliferation in the midgut by regulating tetrahydrofolate transport. Probably in association with st/scarlet, plays a role in zinc storage granule biogenesis in Malpighian tubule principal epithelial cells. This Drosophila melanogaster (Fruit fly) protein is Protein white.